A 660-amino-acid polypeptide reads, in one-letter code: Bifunctional polymyxin resistance protein ArnA (660 aa).

A formyltransferase ArnAFT region spans residues 1–304 (MKTVVFAYHD…TLGLVQGSRL (304 aa)). 86-88 (HLI) provides a ligand contact to (6R)-10-formyltetrahydrofolate. Residue His-104 is the Proton donor; for formyltransferase activity of the active site. (6R)-10-formyltetrahydrofolate-binding positions include Arg-114 and 136–140 (VKRAD). A dehydrogenase ArnADH region spans residues 314–660 (RRTRVLILGV…RTVDLTDKPS (347 aa)). Residues Asp-347 and 368–369 (DI) contribute to the NAD(+) site. Residues Ala-393, Tyr-398, and 432 to 433 (TS) each bind UDP-alpha-D-glucuronate. Residue Glu-434 is the Proton acceptor; for decarboxylase activity of the active site. Residues Arg-460, Asn-492, 526–535 (KLIDGGKQKR), and Tyr-613 each bind UDP-alpha-D-glucuronate. Arg-619 serves as the catalytic Proton donor; for decarboxylase activity.

This sequence in the N-terminal section; belongs to the Fmt family. UDP-L-Ara4N formyltransferase subfamily. The protein in the C-terminal section; belongs to the NAD(P)-dependent epimerase/dehydratase family. UDP-glucuronic acid decarboxylase subfamily. In terms of assembly, homohexamer, formed by a dimer of trimers.

The catalysed reaction is UDP-alpha-D-glucuronate + NAD(+) = UDP-beta-L-threo-pentopyranos-4-ulose + CO2 + NADH. It catalyses the reaction UDP-4-amino-4-deoxy-beta-L-arabinose + (6R)-10-formyltetrahydrofolate = UDP-4-deoxy-4-formamido-beta-L-arabinose + (6S)-5,6,7,8-tetrahydrofolate + H(+). It participates in nucleotide-sugar biosynthesis; UDP-4-deoxy-4-formamido-beta-L-arabinose biosynthesis; UDP-4-deoxy-4-formamido-beta-L-arabinose from UDP-alpha-D-glucuronate: step 1/3. The protein operates within nucleotide-sugar biosynthesis; UDP-4-deoxy-4-formamido-beta-L-arabinose biosynthesis; UDP-4-deoxy-4-formamido-beta-L-arabinose from UDP-alpha-D-glucuronate: step 3/3. It functions in the pathway bacterial outer membrane biogenesis; lipopolysaccharide biosynthesis. Functionally, bifunctional enzyme that catalyzes the oxidative decarboxylation of UDP-glucuronic acid (UDP-GlcUA) to UDP-4-keto-arabinose (UDP-Ara4O) and the addition of a formyl group to UDP-4-amino-4-deoxy-L-arabinose (UDP-L-Ara4N) to form UDP-L-4-formamido-arabinose (UDP-L-Ara4FN). The modified arabinose is attached to lipid A and is required for resistance to polymyxin and cationic antimicrobial peptides. In Escherichia coli (strain SE11), this protein is Bifunctional polymyxin resistance protein ArnA.